Here is a 478-residue protein sequence, read N- to C-terminus: MAKDKKFVEDITPMDEDFAQWYTDIVKKAELADYSSIRGCMIIRPNGYAIWENIQKYVDTKLKEYGHENVSMPIFIPENLLQKEKDHVEGFAPEVAWVTHGGDDELAERLCVRPTSETLFCEHYAKIVQSYKDLPKLYNQWCSVVRWEKTTRPFLRTTEFLWQEGHTIHETKEEAESHSLKILNMYSRLCEDMLAMPVVMGKKTDKEKFAGADDTYTIESLMHDGKALQAGTSHYLGQNFSKAFAIQFSDRNGKLDYPHYTTWAVTTRLIGAIIMVHGDNSGLKLPPRIAPTQAVIIPVAQHKEGVLEKAEELKERLAKVVRVKLDDSDKMPGWKYSEYEMKGIPLRIEIGPKDIEKNQAVLVRRDNREKTIVSLDEIEIKVQEMLDIIHNSMLEEAKKTRDEKTYVATNMEEFEDTIENKPGFIKAMWCGDRACEDKIREVTGATSRCMPFEQEVVSDTCVCCGKKAKNLVYWGRAY.

This sequence belongs to the class-II aminoacyl-tRNA synthetase family. ProS type 3 subfamily. In terms of assembly, homodimer.

The protein localises to the cytoplasm. It carries out the reaction tRNA(Pro) + L-proline + ATP = L-prolyl-tRNA(Pro) + AMP + diphosphate. Catalyzes the attachment of proline to tRNA(Pro) in a two-step reaction: proline is first activated by ATP to form Pro-AMP and then transferred to the acceptor end of tRNA(Pro). This Clostridium botulinum (strain Langeland / NCTC 10281 / Type F) protein is Proline--tRNA ligase.